The primary structure comprises 460 residues: Chromosomal replication initiator protein DnaA (460 aa).

Positions methionine 1 to isoleucine 91 are domain I, interacts with DnaA modulators. A domain II region spans residues isoleucine 91–serine 122. The domain III, AAA+ region stretch occupies residues proline 123–serine 342. 4 residues coordinate ATP: glycine 169, glycine 171, lysine 172, and threonine 173. A domain IV, binds dsDNA region spans residues leucine 343 to lysine 460.

It belongs to the DnaA family. In terms of assembly, oligomerizes as a right-handed, spiral filament on DNA at oriC.

It localises to the cytoplasm. Its function is as follows. Plays an essential role in the initiation and regulation of chromosomal replication. ATP-DnaA binds to the origin of replication (oriC) to initiate formation of the DNA replication initiation complex once per cell cycle. Binds the DnaA box (a 9 base pair repeat at the origin) and separates the double-stranded (ds)DNA. Forms a right-handed helical filament on oriC DNA; dsDNA binds to the exterior of the filament while single-stranded (ss)DNA is stabiized in the filament's interior. The ATP-DnaA-oriC complex binds and stabilizes one strand of the AT-rich DNA unwinding element (DUE), permitting loading of DNA polymerase. After initiation quickly degrades to an ADP-DnaA complex that is not apt for DNA replication. Binds acidic phospholipids. The polypeptide is Chromosomal replication initiator protein DnaA (Wolbachia pipientis wMel).